A 742-amino-acid polypeptide reads, in one-letter code: Tegument protein UL47 (742 aa).

Residues 1–10 (MDAARDGRPE) are compositionally biased toward basic and acidic residues. Disordered regions lie at residues 1–128 (MDAA…TAHL) and 155–199 (EFPP…DDAA). The short motif at 10–30 (ERRPRRSGTYRTHPFQRPSAR) is the Nuclear localization signal element. A compositionally biased stretch (low complexity) spans 18–37 (TYRTHPFQRPSARRSLLDAL). A compositionally biased stretch (basic and acidic residues) spans 38–62 (RAADAEAAERPRVRRPRPDFQRPPD). Acidic residues predominate over residues 63-88 (EDTSEDENVYDYIDGDSSDSADDYDS). Residues 95–122 (RGPNHGAGDAMDTDAPPERAPEGGAPQD) carry the Nuclear export signal motif. Positions 485–495 (LSAYLTLFVAL) match the Nuclear export signal motif.

Belongs to the alphaherpesvirinae HHV-1 UL47 family. As to quaternary structure, interacts with US3 kinase. Interacts with UL31 and UL34; these interactions seem important for efficient virion nuclear egress. Interacts with UL41/VHS. Post-translationally, phosphorylated by US3. This phosphorylation is required for proper nuclear localization.

It localises to the virion tegument. The protein localises to the host nucleus. The protein resides in the host cytoplasm. Its function is as follows. Tegument protein that can bind to various RNA transcripts. Plays a role in the attenuation of selective viral and cellular mRNA degradation by modulating the activity of host shutoff RNase UL41/VHS. Also plays a role in the primary envelopment of virions in the perinuclear space, probably by interacting with two nuclear egress proteins UL31 and UL34. This is Tegument protein UL47 from Bos taurus (Bovine).